The following is a 473-amino-acid chain: Photosystem II CP43 reaction center protein (473 aa).

A propeptide spanning residues 1–14 is cleaved from the precursor; sequence MKTLYSPRRFYPVE. Threonine 15 carries the post-translational modification N-acetylthreonine. Threonine 15 carries the phosphothreonine modification. A run of 5 helical transmembrane segments spans residues 69–93, 134–155, 178–200, 255–275, and 291–312; these read LFEV…PHLA, LLGP…KDRN, KALY…RKIS, KPFA…LSYS, and WFNN…ASQA. Glutamate 367 provides a ligand contact to [CaMn4O5] cluster. The chain crosses the membrane as a helical span at residues 447–471; that stretch reads RARAAAAGFEKGIDRDLEPVLFMTP.

Belongs to the PsbB/PsbC family. PsbC subfamily. PSII is composed of 1 copy each of membrane proteins PsbA, PsbB, PsbC, PsbD, PsbE, PsbF, PsbH, PsbI, PsbJ, PsbK, PsbL, PsbM, PsbT, PsbX, PsbY, PsbZ, Psb30/Ycf12, at least 3 peripheral proteins of the oxygen-evolving complex and a large number of cofactors. It forms dimeric complexes. Binds multiple chlorophylls and provides some of the ligands for the Ca-4Mn-5O cluster of the oxygen-evolving complex. It may also provide a ligand for a Cl- that is required for oxygen evolution. PSII binds additional chlorophylls, carotenoids and specific lipids. serves as cofactor.

The protein localises to the plastid. Its subcellular location is the chloroplast thylakoid membrane. In terms of biological role, one of the components of the core complex of photosystem II (PSII). It binds chlorophyll and helps catalyze the primary light-induced photochemical processes of PSII. PSII is a light-driven water:plastoquinone oxidoreductase, using light energy to abstract electrons from H(2)O, generating O(2) and a proton gradient subsequently used for ATP formation. The polypeptide is Photosystem II CP43 reaction center protein (Ranunculus macranthus (Large buttercup)).